The primary structure comprises 94 residues: Cystatin-A1 (94 aa).

The short motif at 45 to 49 (QLVAG) is the Secondary area of contact element.

This sequence belongs to the cystatin family.

Its subcellular location is the cytoplasm. In terms of biological role, intracellular thiol proteinase inhibitor. Inhibits papain, but not cathepsin B. The sequence is that of Cystatin-A1 (cpiA) from Dictyostelium discoideum (Social amoeba).